We begin with the raw amino-acid sequence, 376 residues long: MEMATKKCNIFGVDSIGEPEGVVKKALDESLSLLDIFKFIEITNFDLDPIMTNWFWQVMVNNHSTHLGRVVLEWFGYEGEDSNQKQKFIDMLKRNKIPYKQLKHTDNEIELYPSIKEEMTLLPHKGAIASSKWLVMEPFNIKMAMLRLNTKNADIIKRYYIKMEELIRLYAQYTTLFQKREKETMSREMLDLRLMMEDMKITNHRQENMLIESHNMLRSMGVEIKDIRHENNDLLDQNNELLERVDDVLQKVNTVQKKLDISVEDRAPQPDKNTRRERFLLLKRNNDTFPYYTIRAQEINARKALKRQRNMYTDVTVLLDIVCHPNTKTFYVRIKDDLKSKGVEFNLCEINISNSNIDEAILVKEMMKINDKKRDV.

Residues 178–261 are a coiled coil; it reads QKREKETMSR…VNTVQKKLDI (84 aa).

This Invertebrate iridescent virus 6 (IIV-6) protein is Putative MSV199 domain-containing protein 468L.